Here is a 443-residue protein sequence, read N- to C-terminus: Glutamine synthetase (443 aa).

Residues 11–97 (VQVEVPRPRF…VYGYIYKGDE (87 aa)) enclose the GS beta-grasp domain. Positions 103 to 443 (PRGILKRVLE…EWELERYFYV (341 aa)) constitute a GS catalytic domain. Mg(2+) contacts are provided by Glu-126 and Glu-128. Glu-176 is a binding site for ATP. Residues Glu-181 and Glu-188 each contribute to the Mg(2+) site. Residue Gly-233 coordinates L-glutamate. His-237 is a Mg(2+) binding site. ATP is bound by residues 239-241 (HIS) and Ser-241. The L-glutamate site is built by Arg-287, Glu-293, and Arg-305. ATP contacts are provided by Arg-305 and Arg-310. A Mg(2+)-binding site is contributed by Glu-322. Position 324 (Arg-324) interacts with L-glutamate.

The protein belongs to the glutamine synthetase family. In terms of assembly, oligomer of 12 subunits arranged in the form of two hexagons. The cofactor is Mg(2+). Mn(2+) is required as a cofactor.

The protein localises to the cytoplasm. It catalyses the reaction L-glutamate + NH4(+) + ATP = L-glutamine + ADP + phosphate + H(+). It carries out the reaction hydroxylamine + L-glutamate + ATP = L-glutamine hydroxamate + ADP + phosphate. The activity of this enzyme is not controlled by adenylation. Its function is as follows. Carries out the ATP-dependent synthesis of glutamine from ammonium nitrogen and glutamate. Exhibits both L-gamma-glutamylhydroxamate synthetase and gamma-glutamyltransferase activities when using hydroxylamine as substrate; in fact, the enzyme possesses low biosynthetic activity, suggesting that the reaction is biased towards the degradation of glutamine under ammonia-rich conditions. Might play some role in ammonia assimilation under ammonia-starvation conditions. Can also use GTP instead of ATP in the synthetase reaction, but not CTP or UTP. The chain is Glutamine synthetase from Thermococcus kodakarensis (strain ATCC BAA-918 / JCM 12380 / KOD1) (Pyrococcus kodakaraensis (strain KOD1)).